The sequence spans 98 residues: MIPDPRDIILRPVVSEKSYGLLDENVYTFIVRPDANKTQIKLAVQKIFNVRVTRVNTINRAGKRKRTKHGWGHRSATKRALVSLAPGDSIEIFGGPGA.

The protein belongs to the universal ribosomal protein uL23 family. In terms of assembly, part of the 50S ribosomal subunit. Contacts protein L29, and trigger factor when it is bound to the ribosome.

One of the early assembly proteins it binds 23S rRNA. One of the proteins that surrounds the polypeptide exit tunnel on the outside of the ribosome. Forms the main docking site for trigger factor binding to the ribosome. This is Large ribosomal subunit protein uL23 from Parafrankia sp. (strain EAN1pec).